Here is a 171-residue protein sequence, read N- to C-terminus: uncharacterized protein (171 aa).

This is an uncharacterized protein from Encephalitozoon cuniculi (strain GB-M1) (Microsporidian parasite).